A 100-amino-acid polypeptide reads, in one-letter code: U12-ctenitoxin-Pn1a (100 aa).

The N-terminal stretch at Met1–Ala28 is a signal peptide. Residues Lys29–Glu41 constitute a propeptide that is removed on maturation. 5 cysteine pairs are disulfide-bonded: Cys44–Cys58, Cys51–Cys64, Cys57–Cys82, Cys66–Cys80, and Cys90–Cys97.

It belongs to the neurotoxin 09 (Tx3-6) family. As to expression, expressed by the venom gland.

It is found in the secreted. Probable neurotoxin. This Phoneutria nigriventer (Brazilian armed spider) protein is U12-ctenitoxin-Pn1a.